Here is a 457-residue protein sequence, read N- to C-terminus: D-hydantoinase (457 aa).

Zn(2+) contacts are provided by histidine 57 and histidine 59. Serine 69 bears the Phosphoserine mark. Zn(2+) is bound at residue lysine 148. The residue at position 148 (lysine 148) is an N6-carboxylysine. Tyrosine 153 contacts substrate. Zn(2+)-binding residues include histidine 181 and histidine 237. Substrate is bound at residue threonine 286. Aspartate 313 provides a ligand contact to Zn(2+). Residue asparagine 335 coordinates substrate.

Belongs to the metallo-dependent hydrolases superfamily. Hydantoinase/dihydropyrimidinase family. As to quaternary structure, homotetramer. Zn(2+) is required as a cofactor. In terms of processing, carboxylation allows a single lysine to coordinate two zinc ions.

In terms of biological role, catalyzes the stereospecific hydrolysis of the cyclic amide bond of D-hydantoin derivatives. The protein is D-hydantoinase (hyuA) of Rhizobium radiobacter (Agrobacterium tumefaciens).